Consider the following 454-residue polypeptide: NEDD8-activating enzyme E1 catalytic subunit (454 aa).

At Ala-2 the chain carries N-acetylalanine. Residue 56–80 coordinates ATP; the sequence is GLGCELLKDLALSGFRNLEVIDMDR. The active-site Glycyl thioester intermediate is the Cys-215.

The protein belongs to the ubiquitin-activating E1 family. UBA3 subfamily. Heterodimer of UBA3/ECR1 and AXR1. Interacts with NEDD8 and RCE1. In terms of tissue distribution, expressed in shoot, root and floral meristems, in vascular tissues of cotyledons and mature leaves, and in the stele of the root.

The protein localises to the nucleus. It carries out the reaction ATP + [NEDD8 protein] + [E1 NEDD8-activating enzyme]-L-cysteine = AMP + diphosphate + [E1 NEDD8-activating enzyme]-S-[NEDD8 protein]-yl-L-cysteine.. It functions in the pathway protein modification; protein neddylation. Functionally, catalytic subunit of the dimeric ECR1-AXR1 E1 enzyme. E1 activates NEDD8/RUB1 by first adenylating its C-terminal glycine residue with ATP, thereafter linking this residue to the side chain of the catalytic cysteine, yielding a NEDD8-ECR1 thioester and free AMP. E1 finally transfers NEDD8 to the catalytic cysteine of RCE1. The sequence is that of NEDD8-activating enzyme E1 catalytic subunit (ECR1) from Arabidopsis thaliana (Mouse-ear cress).